The following is a 286-amino-acid chain: Phosphatidylglycerol--prolipoprotein diacylglyceryl transferase (286 aa).

Helical transmembrane passes span 24–44 (IGPL…LFAW), 72–92 (FIVW…VLFY), 104–124 (IFAV…VILA), 140–160 (FDVV…ANFI), 190–210 (LYEA…LTHS), 218–238 (RFVG…VEFF), and 253–273 (WLTM…WAMA). Position 155 (Arg155) interacts with a 1,2-diacyl-sn-glycero-3-phospho-(1'-sn-glycerol).

This sequence belongs to the Lgt family.

The protein localises to the cell inner membrane. The enzyme catalyses L-cysteinyl-[prolipoprotein] + a 1,2-diacyl-sn-glycero-3-phospho-(1'-sn-glycerol) = an S-1,2-diacyl-sn-glyceryl-L-cysteinyl-[prolipoprotein] + sn-glycerol 1-phosphate + H(+). It functions in the pathway protein modification; lipoprotein biosynthesis (diacylglyceryl transfer). Its function is as follows. Catalyzes the transfer of the diacylglyceryl group from phosphatidylglycerol to the sulfhydryl group of the N-terminal cysteine of a prolipoprotein, the first step in the formation of mature lipoproteins. The polypeptide is Phosphatidylglycerol--prolipoprotein diacylglyceryl transferase (Mesorhizobium japonicum (strain LMG 29417 / CECT 9101 / MAFF 303099) (Mesorhizobium loti (strain MAFF 303099))).